Here is a 1261-residue protein sequence, read N- to C-terminus: SNF2 domain-containing protein CLASSY 2 (1261 aa).

The segment at 458 to 479 is disordered; it reads FQKRTSRSSRSVAPKTEDSDEP. In terms of domain architecture, Helicase ATP-binding spans 704 to 904; that stretch reads DPTSGNIGGC…FNTLCLARPK (201 aa). 717–724 serves as a coordination point for ATP; that stretch reads HSPGAGKT. A DEAH box motif is present at residues 855 to 858; that stretch reads DEGH. Residues 1067-1232 form the Helicase C-terminal domain; that stretch reads FVLNLIFRVV…DPSLWQAEKI (166 aa).

It belongs to the helicase family. In terms of assembly, interacts with NRPD1 and SHH1.

The protein resides in the nucleus. In terms of biological role, probable chromatin remodeling factor. In Arabidopsis thaliana (Mouse-ear cress), this protein is SNF2 domain-containing protein CLASSY 2 (CLSY2).